Reading from the N-terminus, the 446-residue chain is uncharacterized protein (446 aa).

Helical transmembrane passes span Leu20–Val40, Ser42–Glu62, Trp95–Phe115, Val127–Phe147, Ala160–Gly180, Leu205–Leu225, Leu237–Val257, Ile284–Val304, Trp331–Leu351, Ile355–Leu375, Gly388–Phe408, and Pro414–Gln434.

The protein belongs to the amino acid-polyamine-organocation (APC) superfamily.

The protein resides in the cell membrane. This is an uncharacterized protein from Bacillus subtilis (strain 168).